Consider the following 379-residue polypeptide: Transcription termination factor 1a, mitochondrial (379 aa).

A mitochondrion-targeting transit peptide spans 1–37 (MASRNIWCVRRNFLFDLRDWMLQYSAEVFLKSISFRP). Interaction with DNA regions lie at residues 151-152 (RS), 229-233 (QSTKR), 306-313 (SEKKFNDK), 337-340 (SINT), and 366-373 (SQRRYEAK).

It belongs to the mTERF family. As to quaternary structure, monomer. Post-translationally, phosphoprotein with mostly four phosphate groups. While the DNA-binding activity is unaffected by the phosphorylation state, only the phosphorylated form of the protein is active for termination activity. Functioning seems to be regulated by phosphorylation. As to expression, predominantly expressed in heart and liver, with extremely low levels in other tissues. Expressed strongly in the heart and at lower levels in brain, liver and kidney.

It is found in the mitochondrion. Functionally, transcription termination factor. Binds to a 28 bp region within the tRNA(Leu(uur)) gene at a position immediately adjacent to and downstream of the 16S rRNA gene; this region comprises a tridecamer sequence critical for directing accurate termination. Binds DNA along the major grove and promotes DNA bending and partial unwinding. Promotes base flipping. Transcription termination activity appears to be polarized with highest specificity for transcripts initiated on the light strand. The protein is Transcription termination factor 1a, mitochondrial (Mterf1a) of Mus musculus (Mouse).